Consider the following 160-residue polypeptide: Peptide methionine sulfoxide reductase MsrA (160 aa).

C11 is an active-site residue.

Belongs to the MsrA Met sulfoxide reductase family.

It catalyses the reaction L-methionyl-[protein] + [thioredoxin]-disulfide + H2O = L-methionyl-(S)-S-oxide-[protein] + [thioredoxin]-dithiol. It carries out the reaction [thioredoxin]-disulfide + L-methionine + H2O = L-methionine (S)-S-oxide + [thioredoxin]-dithiol. In terms of biological role, has an important function as a repair enzyme for proteins that have been inactivated by oxidation. Catalyzes the reversible oxidation-reduction of methionine sulfoxide in proteins to methionine. This is Peptide methionine sulfoxide reductase MsrA from Malacoplasma penetrans (strain HF-2) (Mycoplasma penetrans).